The chain runs to 366 residues: Quinolinate synthase (366 aa).

Iminosuccinate is bound by residues H44 and S61. C108 is a [4Fe-4S] cluster binding site. Iminosuccinate-binding positions include 139 to 141 (YVN) and S160. Residue C228 participates in [4Fe-4S] cluster binding. Residues 254 to 256 (HPE) and T271 each bind iminosuccinate. C318 serves as a coordination point for [4Fe-4S] cluster.

This sequence belongs to the quinolinate synthase family. Type 3 subfamily. [4Fe-4S] cluster is required as a cofactor.

The protein resides in the cytoplasm. It catalyses the reaction iminosuccinate + dihydroxyacetone phosphate = quinolinate + phosphate + 2 H2O + H(+). The protein operates within cofactor biosynthesis; NAD(+) biosynthesis; quinolinate from iminoaspartate: step 1/1. Catalyzes the condensation of iminoaspartate with dihydroxyacetone phosphate to form quinolinate. The polypeptide is Quinolinate synthase (Staphylococcus carnosus (strain TM300)).